Reading from the N-terminus, the 59-residue chain is Single-pass membrane and coiled-coil domain-containing protein 4 homolog (59 aa).

The span at 1–11 (MAGRNKAKPRL) shows a compositional bias: basic residues. The interval 1–20 (MAGRNKAKPRLSKKEKEERR) is disordered. A coiled-coil region spans residues 10–30 (RLSKKEKEERRKDMAEVQEKV). Residues 30–50 (VFSVVVPVVVAFTVVIMLIVY) form a helical membrane-spanning segment.

This sequence belongs to the SMCO4 family.

The protein resides in the membrane. This Argas monolakensis (Mono lake bird tick) protein is Single-pass membrane and coiled-coil domain-containing protein 4 homolog.